The chain runs to 500 residues: Apolipoprotein N-acyltransferase (500 aa).

Helical transmembrane passes span 5–25 (VAPFAAWFLAWIALAPLWIFV), 38–58 (LLLLGLTWGIGYHGVALFWIT), 74–94 (LAITIFCWSFISFYGGLFGAI), 111–131 (ILIGTAMWCVLESLWSAGPLW), 145–165 (AILHLGQISGPNLVTAAIVSV), and 185–205 (LAIATGLLITLHLIGFGLYTA). The region spanning 215–462 (LKVGIVQGNI…ETIYRRQTQN (248 aa)) is the CN hydrolase domain. Glu261 acts as the Proton acceptor in catalysis. Lys318 is an active-site residue. Cys369 (nucleophile) is an active-site residue. Residues 469–489 (DWFTPLLVGLSFLGWSLNIFW) form a helical membrane-spanning segment.

This sequence belongs to the CN hydrolase family. Apolipoprotein N-acyltransferase subfamily.

Its subcellular location is the cell inner membrane. The enzyme catalyses N-terminal S-1,2-diacyl-sn-glyceryl-L-cysteinyl-[lipoprotein] + a glycerophospholipid = N-acyl-S-1,2-diacyl-sn-glyceryl-L-cysteinyl-[lipoprotein] + a 2-acyl-sn-glycero-3-phospholipid + H(+). It functions in the pathway protein modification; lipoprotein biosynthesis (N-acyl transfer). Functionally, catalyzes the phospholipid dependent N-acylation of the N-terminal cysteine of apolipoprotein, the last step in lipoprotein maturation. This is Apolipoprotein N-acyltransferase from Nostoc sp. (strain PCC 7120 / SAG 25.82 / UTEX 2576).